The primary structure comprises 553 residues: LIM domain-containing protein B (553 aa).

The segment at 43–115 (LTYKDPNVST…SINNNISNNN (73 aa)) is disordered. The segment covering 99–114 (GPGLPNNSINNNISNN) has biased composition (low complexity). 5 LIM zinc-binding domains span residues 205 to 262 (PICG…ELFS), 263 to 322 (PRCF…RQKR), 328 to 387 (EICS…KQIL), 388 to 447 (NICG…FFGR), and 448 to 505 (QCFK…LPKE). The tract at residues 534–553 (ELKKERERAAKEKEKESKAK) is disordered.

It is found in the cytoplasm. The protein localises to the cell cortex. It localises to the cytoskeleton. Regulates and controls rearrangements of the actin cytoskeleton. Required for tip formation, morphogenesis, cell adhesion and motility, chemotaxis and aggregates formation. May function downstream of paxB. In Dictyostelium discoideum (Social amoeba), this protein is LIM domain-containing protein B (limB).